The primary structure comprises 395 residues: MSFKTLDDIGDLTGKTVLVREDLNVPMQDGAVTDDTRLRATIATLNELSDKGAKVLVLAHFGRPKGQPSEEFSLKKLAAPLAHVLGRPVSYIDWESDKAAVAALTPGAIAVLENTRFFDGEEKNDPAVIERFASLGDIYVNDAFSAAHRAHASTEGLAHVLPAYAGRAMEAELKALQKALGEPERPVAAVVGGAKVSTKLDVLKHLVSKVDHLIIGGGMANTFLAARGVNVGKSLCEHDLTGTAEEILDNADKSGCTVHLPYDVVVSKEFTANPPSLRTCNVHEVAADEMILDVGPAAVEALADVLKTCKTLVWNGPMGAFETEPFDAATVALARTAAALTKEGSLVSVAGGGDTVAALNHAGVVGDFSYISTAGGAFLEWMEGKELPGVAALEG.

Residues 22-24 (DLN), Arg37, 60-63 (HFGR), Arg116, and Arg149 contribute to the substrate site. Residues Lys199, Glu322, and 352–355 (GGDT) each bind ATP.

The protein belongs to the phosphoglycerate kinase family. In terms of assembly, monomer.

It is found in the cytoplasm. The catalysed reaction is (2R)-3-phosphoglycerate + ATP = (2R)-3-phospho-glyceroyl phosphate + ADP. The protein operates within carbohydrate degradation; glycolysis; pyruvate from D-glyceraldehyde 3-phosphate: step 2/5. The polypeptide is Phosphoglycerate kinase (Novosphingobium aromaticivorans (strain ATCC 700278 / DSM 12444 / CCUG 56034 / CIP 105152 / NBRC 16084 / F199)).